The sequence spans 231 residues: Large ribosomal subunit protein uL1 (231 aa).

It belongs to the universal ribosomal protein uL1 family. Part of the 50S ribosomal subunit.

In terms of biological role, binds directly to 23S rRNA. The L1 stalk is quite mobile in the ribosome, and is involved in E site tRNA release. Protein L1 is also a translational repressor protein, it controls the translation of the L11 operon by binding to its mRNA. In Staphylococcus haemolyticus (strain JCSC1435), this protein is Large ribosomal subunit protein uL1.